Reading from the N-terminus, the 340-residue chain is Phenylalanine--tRNA ligase alpha subunit (340 aa).

Glu254 provides a ligand contact to Mg(2+).

This sequence belongs to the class-II aminoacyl-tRNA synthetase family. Phe-tRNA synthetase alpha subunit type 1 subfamily. In terms of assembly, tetramer of two alpha and two beta subunits. Mg(2+) serves as cofactor.

It localises to the cytoplasm. The enzyme catalyses tRNA(Phe) + L-phenylalanine + ATP = L-phenylalanyl-tRNA(Phe) + AMP + diphosphate + H(+). The sequence is that of Phenylalanine--tRNA ligase alpha subunit from Caldicellulosiruptor saccharolyticus (strain ATCC 43494 / DSM 8903 / Tp8T 6331).